The chain runs to 771 residues: Probable dipeptidyl peptidase 4 (771 aa).

The N-terminal stretch at 1-16 is a signal peptide; sequence MKYSKLLLLLVSVVQA. N-linked (GlcNAc...) asparagine glycosylation is found at Asn-37, Asn-80, Asn-114, Asn-173, Asn-222, Asn-470, and Asn-495. Active-site charge relay system residues include Ser-618, Asp-695, and His-730.

Belongs to the peptidase S9B family.

The protein resides in the secreted. The catalysed reaction is Release of an N-terminal dipeptide, Xaa-Yaa-|-Zaa-, from a polypeptide, preferentially when Yaa is Pro, provided Zaa is neither Pro nor hydroxyproline.. In terms of biological role, extracellular dipeptidyl-peptidase which removes N-terminal dipeptides sequentially from polypeptides having unsubstituted N-termini provided that the penultimate residue is proline. This is Probable dipeptidyl peptidase 4 (dpp4) from Aspergillus flavus (strain ATCC 200026 / FGSC A1120 / IAM 13836 / NRRL 3357 / JCM 12722 / SRRC 167).